We begin with the raw amino-acid sequence, 1673 residues long: Calmodulin-binding transcription activator 1 (1673 aa).

A DNA-binding region (CG-1) is located at residues 63–188; that stretch reads KCSSLPKERH…YLNVPAIEDC (126 aa). The Nuclear localization signal motif lies at 112-119; sequence RKKVKYRK. The interval 283-375 is disordered; it reads HRIISPKVEP…LNSDPDMVDS (93 aa). Basic and acidic residues predominate over residues 302-313; it reads EVQHNDVSEGKH. Over residues 337-367 the composition is skewed to polar residues; the sequence is HQSSTEVSSTNQVEVPDTTQSSPVSISSGLN. The region spanning 875–953 is the IPT/TIG domain; the sequence is DYSPEWSYPE…ISNSVVFEYK (79 aa). A disordered region spans residues 990 to 1021; sequence MAEMTGSQQHKQASGGGSSGGGSGSGNGGSQA. Over residues 1003 to 1018 the composition is skewed to gly residues; that stretch reads SGGGSSGGGSGSGNGG. 3 ANK repeats span residues 1064–1093, 1109–1129, and 1143–1172; these read RGMT…KHAD, FSCT…AVVL, and LGRL…DEQA. Disordered regions lie at residues 1215–1246 and 1264–1317; these read ASTN…PKKH and ALSL…GSQP. The span at 1273–1289 shows a compositional bias: polar residues; it reads RKQSPSSKQSVPETLSP. 3 consecutive IQ domains span residues 1547-1576, 1577-1599, and 1600-1622; these read QEVA…AAIL, IQSK…AAVL, and IQKY…TAVI.

Belongs to the CAMTA family. In terms of assembly, may interact with calmodulin. As to expression, normally expressed in non-neoplastic adult central nervous system tissues: detected in whole brain, cerebellum, brain cortex, occipital lobe, frontal lobe, temporal lobe, putamen. Expression levels are low in oligodendroglial tumors, and are reduced by half in oligodendroglioma and astrocytoma cases with 1p loss of heterozygosity. Detected in neuroblastic-type cultured neuroblastoma cells. Expressed in heart and kidney.

The protein localises to the nucleus. The protein resides in the cytoplasm. Transcriptional activator. This Homo sapiens (Human) protein is Calmodulin-binding transcription activator 1.